Here is a 236-residue protein sequence, read N- to C-terminus: Small ribosomal subunit protein uS2c (236 aa).

The protein belongs to the universal ribosomal protein uS2 family.

It is found in the plastid. Its subcellular location is the chloroplast. The sequence is that of Small ribosomal subunit protein uS2c (rps2) from Coffea arabica (Arabian coffee).